A 551-amino-acid chain; its full sequence is ETS domain-containing transcription factor ERF (551 aa).

2 positions are modified to phosphothreonine: threonine 3 and threonine 7. Phosphoserine occurs at positions 20 and 24. The segment at residues 27–107 (IQLWHFILEL…KGKRFTYKFN (81 aa)) is a DNA-binding region (ETS). Disordered regions lie at residues 130 to 169 (QSAP…SSSS) and 184 to 304 (GSVS…SHFS). A phosphoserine mark is found at serine 185 and serine 190. Over residues 239–250 (RGGPEPLSPFPV) the composition is skewed to pro residues. Low complexity predominate over residues 251-268 (SPLAGPGSLLPPQLSPAL). Over residues 289 to 301 (SGGGGPSGSGGGS) the composition is skewed to gly residues. Residue serine 327 is modified to Phosphoserine. The interval 342-476 (PQRPDKCPLP…KPEPGEAPGV (135 aa)) is disordered. Residues 348-361 (CPLPPMAPETPPVP) show a composition bias toward pro residues. The span at 362-373 (SSASSSSSSSSS) shows a compositional bias: low complexity. The span at 404-413 (GGSGSGGLAE) shows a compositional bias: gly residues. Residues serine 433 and serine 437 each carry the phosphoserine modification. A compositionally biased stretch (acidic residues) spans 433–453 (SEGESEEVEVTDISDEDEEDG). Residue threonine 443 is modified to Phosphothreonine. Residue serine 446 is modified to Phosphoserine. Residues lysine 467, lysine 483, and lysine 514 each participate in a glycyl lysine isopeptide (Lys-Gly) (interchain with G-Cter in SUMO2) cross-link. A disordered region spans residues 495–551 (RLEGGGCLSGGPEDEGEDKKVRGDVGPGESGGPLTPRRVSSDLQHATAQLSLEHRDS). Residue threonine 529 is modified to Phosphothreonine; by MAPK1. Phosphoserine is present on residues serine 534, serine 535, and serine 551. Residues 535 to 544 (SDLQHATAQL) are compositionally biased toward polar residues.

It belongs to the ETS family. In terms of processing, phosphorylated by multiple kinases including MAPK1/ERK2 at THR-529. Phosphorylation regulates the activity of ERF. Expressed along the osteogenic margins of the developing calvarial bones, in a similar distribution to that observed for the master osteogenic regulator RUNX2.

The protein resides in the nucleus. Potent transcriptional repressor that binds to the H1 element of the Ets2 promoter. May regulate other genes involved in cellular proliferation. Required for extraembryonic ectoderm differentiation, ectoplacental cone cavity closure, and chorioallantoic attachment. May be important for regulating trophoblast stem cell differentiation. The protein is ETS domain-containing transcription factor ERF (Erf) of Mus musculus (Mouse).